Reading from the N-terminus, the 493-residue chain is Aluminum-activated malate transporter 1 (493 aa).

Transmembrane regions (helical) follow at residues 28 to 48 (VGLALVLVSSFYYYQPFGPFT), 51 to 71 (FGINAMWAVMTVVVVFEFSVG), 104 to 124 (TVEPILLVMLVFVQAALSTFV), 133 to 153 (KFDYGILIFILTFALISLSGF), and 169 to 189 (VVIGGVSCILISIFVCPVWAG). Phosphoserine occurs at positions 320 and 327. A Phosphothreonine modification is found at Thr385. Residues 441–452 (DNDRSNNVDDSR) show a composition bias toward basic and acidic residues. Residues 441-460 (DNDRSNNVDDSRGGSSQDSC) form a disordered region.

Belongs to the aromatic acid exporter (TC 2.A.85) family. In terms of processing, phosphorylated. A reversible phosphorylation is required for activation. As to expression, expressed in roots, but not in shoots. Detected in the root apex in absence of aluminum stress and in root apices, the stele and endodermis of the elongating zone of primary and lateral roots after aluminum stress. Not expressed in cortical and epidermal cells.

It is found in the cell membrane. Its activity is regulated as follows. Activated by external aluminum. Its function is as follows. Malate transporter critical for aluminum tolerance. The STOP1 transcription factor is required for ALMT1 expression. This Arabidopsis thaliana (Mouse-ear cress) protein is Aluminum-activated malate transporter 1 (ALMT1).